A 93-amino-acid chain; its full sequence is Aspartyl/glutamyl-tRNA(Asn/Gln) amidotransferase subunit C (93 aa).

The protein belongs to the GatC family. Heterotrimer of A, B and C subunits.

It carries out the reaction L-glutamyl-tRNA(Gln) + L-glutamine + ATP + H2O = L-glutaminyl-tRNA(Gln) + L-glutamate + ADP + phosphate + H(+). It catalyses the reaction L-aspartyl-tRNA(Asn) + L-glutamine + ATP + H2O = L-asparaginyl-tRNA(Asn) + L-glutamate + ADP + phosphate + 2 H(+). In terms of biological role, allows the formation of correctly charged Asn-tRNA(Asn) or Gln-tRNA(Gln) through the transamidation of misacylated Asp-tRNA(Asn) or Glu-tRNA(Gln) in organisms which lack either or both of asparaginyl-tRNA or glutaminyl-tRNA synthetases. The reaction takes place in the presence of glutamine and ATP through an activated phospho-Asp-tRNA(Asn) or phospho-Glu-tRNA(Gln). This chain is Aspartyl/glutamyl-tRNA(Asn/Gln) amidotransferase subunit C, found in Methanococcoides burtonii (strain DSM 6242 / NBRC 107633 / OCM 468 / ACE-M).